Here is a 120-residue protein sequence, read N- to C-terminus: Chaperonin GroEL (120 aa).

23-27 (DGTTT) is an ATP binding site.

The protein belongs to the chaperonin (HSP60) family. As to quaternary structure, forms a cylinder of 14 subunits composed of two heptameric rings stacked back-to-back. Interacts with the co-chaperonin GroES.

The protein localises to the cytoplasm. It catalyses the reaction ATP + H2O + a folded polypeptide = ADP + phosphate + an unfolded polypeptide.. In terms of biological role, together with its co-chaperonin GroES, plays an essential role in assisting protein folding. The GroEL-GroES system forms a nano-cage that allows encapsulation of the non-native substrate proteins and provides a physical environment optimized to promote and accelerate protein folding. This Mycolicibacterium chitae (Mycobacterium chitae) protein is Chaperonin GroEL.